Consider the following 73-residue polypeptide: Homeodomain-only protein (73 aa).

A DNA-binding region (homeobox; degenerate) is located at residues Thr-3 to Glu-62.

As to quaternary structure, interacts with serum response factor (SRF). Component of a large complex containing histone deacetylases such as HDAC2. Interacts with the acetylated forms of HSPA1A and HSPA1B. Interacts with HSPA8.

The protein localises to the nucleus. The protein resides in the cytoplasm. Functionally, atypical homeodomain protein which does not bind DNA and is required to modulate cardiac growth and development. Acts via its interaction with SRF, thereby modulating the expression of SRF-dependent cardiac-specific genes and cardiac development. Prevents SRF-dependent transcription either by inhibiting SRF binding to DNA or by recruiting histone deacetylase (HDAC) proteins that prevent transcription by SRF. Overexpression causes cardiac hypertrophy. Acts as a co-chaperone for HSPA1A and HSPA1B chaperone proteins and assists in chaperone-mediated protein refolding. The sequence is that of Homeodomain-only protein (HOPX) from Bos taurus (Bovine).